The following is a 197-amino-acid chain: Gene 49 protein (197 aa).

2 disordered regions span residues M1–P49 and F114–K157. Positions L117 to Q135 are enriched in gly residues. Residues Q136–Q146 are compositionally biased toward low complexity.

In Mycobacterium phage D29 (Mycobacteriophage D29), this protein is Gene 49 protein (49).